Here is a 264-residue protein sequence, read N- to C-terminus: 3-methyl-2-oxobutanoate hydroxymethyltransferase (264 aa).

2 residues coordinate Mg(2+): D45 and D84. Residues 45–46 (DS), D84, and K112 each bind 3-methyl-2-oxobutanoate. E114 serves as a coordination point for Mg(2+). E181 functions as the Proton acceptor in the catalytic mechanism.

The protein belongs to the PanB family. As to quaternary structure, homodecamer; pentamer of dimers. The cofactor is Mg(2+).

It is found in the cytoplasm. It carries out the reaction 3-methyl-2-oxobutanoate + (6R)-5,10-methylene-5,6,7,8-tetrahydrofolate + H2O = 2-dehydropantoate + (6S)-5,6,7,8-tetrahydrofolate. The protein operates within cofactor biosynthesis; (R)-pantothenate biosynthesis; (R)-pantoate from 3-methyl-2-oxobutanoate: step 1/2. Its function is as follows. Catalyzes the reversible reaction in which hydroxymethyl group from 5,10-methylenetetrahydrofolate is transferred onto alpha-ketoisovalerate to form ketopantoate. The sequence is that of 3-methyl-2-oxobutanoate hydroxymethyltransferase from Shewanella denitrificans (strain OS217 / ATCC BAA-1090 / DSM 15013).